Here is a 91-residue protein sequence, read N- to C-terminus: Small ribosomal subunit protein uS19m (91 aa).

This sequence belongs to the universal ribosomal protein uS19 family. In terms of assembly, component of the mitochondrial small ribosomal subunit (mt-SSU). Mature yeast 74S mitochondrial ribosomes consist of a small (37S) and a large (54S) subunit. The 37S small subunit contains a 15S ribosomal RNA (15S mt-rRNA) and 34 different proteins. The 54S large subunit contains a 21S rRNA (21S mt-rRNA) and 46 different proteins.

It localises to the mitochondrion. In terms of biological role, component of the mitochondrial ribosome (mitoribosome), a dedicated translation machinery responsible for the synthesis of mitochondrial genome-encoded proteins, including at least some of the essential transmembrane subunits of the mitochondrial respiratory chain. The mitoribosomes are attached to the mitochondrial inner membrane and translation products are cotranslationally integrated into the membrane. The polypeptide is Small ribosomal subunit protein uS19m (RSM19) (Saccharomyces cerevisiae (strain ATCC 204508 / S288c) (Baker's yeast)).